We begin with the raw amino-acid sequence, 342 residues long: Anthranilate phosphoribosyltransferase (342 aa).

5-phospho-alpha-D-ribose 1-diphosphate is bound by residues Gly-74, 77–78 (GD), Thr-82, 84–87 (NVST), 101–109 (KHGNRSVSG), and Ser-113. Gly-74 contacts anthranilate. Ser-86 serves as a coordination point for Mg(2+). Asn-104 provides a ligand contact to anthranilate. Arg-159 provides a ligand contact to anthranilate. Residues Asp-218 and Glu-219 each coordinate Mg(2+).

Belongs to the anthranilate phosphoribosyltransferase family. In terms of assembly, homodimer. Mg(2+) serves as cofactor.

It carries out the reaction N-(5-phospho-beta-D-ribosyl)anthranilate + diphosphate = 5-phospho-alpha-D-ribose 1-diphosphate + anthranilate. It participates in amino-acid biosynthesis; L-tryptophan biosynthesis; L-tryptophan from chorismate: step 2/5. Its function is as follows. Catalyzes the transfer of the phosphoribosyl group of 5-phosphorylribose-1-pyrophosphate (PRPP) to anthranilate to yield N-(5'-phosphoribosyl)-anthranilate (PRA). This Sulfolobus acidocaldarius (strain ATCC 33909 / DSM 639 / JCM 8929 / NBRC 15157 / NCIMB 11770) protein is Anthranilate phosphoribosyltransferase.